We begin with the raw amino-acid sequence, 436 residues long: Adenylosuccinate synthetase (436 aa).

GTP is bound by residues 12–18 (GDEGKGK) and 40–42 (GHT). Residue Asp13 is the Proton acceptor of the active site. The Mg(2+) site is built by Asp13 and Gly40. IMP is bound by residues 13–16 (DEGK), 38–41 (NAGH), Thr128, Arg142, Gln223, Thr238, and Arg302. His41 functions as the Proton donor in the catalytic mechanism. 298 to 304 (TTTGRRR) serves as a coordination point for substrate. GTP is bound by residues Arg304, 330–332 (KLD), and 412–414 (SLG).

This sequence belongs to the adenylosuccinate synthetase family. As to quaternary structure, homodimer. It depends on Mg(2+) as a cofactor.

Its subcellular location is the cytoplasm. It carries out the reaction IMP + L-aspartate + GTP = N(6)-(1,2-dicarboxyethyl)-AMP + GDP + phosphate + 2 H(+). The protein operates within purine metabolism; AMP biosynthesis via de novo pathway; AMP from IMP: step 1/2. Plays an important role in the de novo pathway of purine nucleotide biosynthesis. Catalyzes the first committed step in the biosynthesis of AMP from IMP. This is Adenylosuccinate synthetase from Prochlorococcus marinus (strain AS9601).